Consider the following 314-residue polypeptide: 2,3-dihydroxyphenylpropionate/2,3-dihydroxicinnamic acid 1,2-dioxygenase (314 aa).

The active-site Proton donor is the H115. The Proton acceptor role is filled by H179.

Belongs to the LigB/MhpB extradiol dioxygenase family. In terms of assembly, homotetramer. Fe(2+) is required as a cofactor.

It carries out the reaction 3-(2,3-dihydroxyphenyl)propanoate + O2 = (2Z,4E)-2-hydroxy-6-oxonona-2,4-dienedioate + H(+). The catalysed reaction is (2E)-3-(2,3-dihydroxyphenyl)prop-2-enoate + O2 = (2Z,4E,7E)-2-hydroxy-6-oxonona-2,4,7-trienedioate + H(+). The protein operates within aromatic compound metabolism; 3-phenylpropanoate degradation. In terms of biological role, catalyzes the non-heme iron(II)-dependent oxidative cleavage of 2,3-dihydroxyphenylpropionic acid and 2,3-dihydroxicinnamic acid into 2-hydroxy-6-ketononadienedioate and 2-hydroxy-6-ketononatrienedioate, respectively. The chain is 2,3-dihydroxyphenylpropionate/2,3-dihydroxicinnamic acid 1,2-dioxygenase from Escherichia coli (strain 55989 / EAEC).